A 402-amino-acid chain; its full sequence is Sulfate adenylyltransferase (402 aa).

Belongs to the sulfate adenylyltransferase family.

The catalysed reaction is sulfate + ATP + H(+) = adenosine 5'-phosphosulfate + diphosphate. The protein operates within sulfur metabolism; hydrogen sulfide biosynthesis; sulfite from sulfate: step 1/3. In Vesicomyosocius okutanii subsp. Calyptogena okutanii (strain HA), this protein is Sulfate adenylyltransferase.